We begin with the raw amino-acid sequence, 421 residues long: Testin (421 aa).

The 108-residue stretch at 92–199 (MILTNPVAAK…GDVKLPCEMD (108 aa)) folds into the PET domain. A disordered region spans residues 133–164 (EKQPVAGSEGAQYRKKQLAKQLPAHDQDPSKC). Positions 155–164 (PAHDQDPSKC) are enriched in basic and acidic residues. LIM zinc-binding domains follow at residues 234–297 (YSCY…CDSE), 299–359 (PRCA…NHAV), and 362–421 (QGCH…KMMS).

This sequence belongs to the prickle / espinas / testin family. In terms of assembly, interacts via LIM domain 1 with ZYX. Interacts (via LIM domain 3) with ENAH and VASP. Interacts with ALKBH4, talin, actin, alpha-actinin, GRIP1 and PXN. Interacts (via LIM domain 2) with ACTL7A (via N-terminus). Heterodimer with ACTL7A; the heterodimer interacts with ENAH to form a heterotrimer.

The protein resides in the cytoplasm. The protein localises to the cell junction. It is found in the focal adhesion. In terms of biological role, scaffold protein that may play a role in cell adhesion, cell spreading and in the reorganization of the actin cytoskeleton. Plays a role in the regulation of cell proliferation. May act as a tumor suppressor. The protein is Testin (TES) of Aotus nancymaae (Ma's night monkey).